We begin with the raw amino-acid sequence, 447 residues long: Tubulin beta chain (447 aa).

GTP is bound by residues glutamine 11, glutamate 69, serine 138, glycine 142, threonine 143, glycine 144, asparagine 204, and asparagine 226. Residue glutamate 69 participates in Mg(2+) binding. A disordered region spans residues 424 to 447; the sequence is QYQEASVSEGEEEYDEEAPLEGEE. The segment covering 432 to 447 has biased composition (acidic residues); it reads EGEEEYDEEAPLEGEE.

Belongs to the tubulin family. As to quaternary structure, dimer of alpha and beta chains. A typical microtubule is a hollow water-filled tube with an outer diameter of 25 nm and an inner diameter of 15 nM. Alpha-beta heterodimers associate head-to-tail to form protofilaments running lengthwise along the microtubule wall with the beta-tubulin subunit facing the microtubule plus end conferring a structural polarity. Microtubules usually have 13 protofilaments but different protofilament numbers can be found in some organisms and specialized cells. It depends on Mg(2+) as a cofactor.

Its subcellular location is the cytoplasm. The protein localises to the cytoskeleton. Tubulin is the major constituent of microtubules, a cylinder consisting of laterally associated linear protofilaments composed of alpha- and beta-tubulin heterodimers. Microtubules grow by the addition of GTP-tubulin dimers to the microtubule end, where a stabilizing cap forms. Below the cap, tubulin dimers are in GDP-bound state, owing to GTPase activity of alpha-tubulin. The sequence is that of Tubulin beta chain from Venturia inaequalis (Apple scab fungus).